The sequence spans 185 residues: Crossover junction endodeoxyribonuclease RuvC (185 aa).

Active-site residues include Asp-7, Glu-68, and Asp-141. Residues Asp-7, Glu-68, and Asp-141 each coordinate Mg(2+).

Belongs to the RuvC family. Homodimer which binds Holliday junction (HJ) DNA. The HJ becomes 2-fold symmetrical on binding to RuvC with unstacked arms; it has a different conformation from HJ DNA in complex with RuvA. In the full resolvosome a probable DNA-RuvA(4)-RuvB(12)-RuvC(2) complex forms which resolves the HJ. It depends on Mg(2+) as a cofactor.

The protein localises to the cytoplasm. The enzyme catalyses Endonucleolytic cleavage at a junction such as a reciprocal single-stranded crossover between two homologous DNA duplexes (Holliday junction).. Functionally, the RuvA-RuvB-RuvC complex processes Holliday junction (HJ) DNA during genetic recombination and DNA repair. Endonuclease that resolves HJ intermediates. Cleaves cruciform DNA by making single-stranded nicks across the HJ at symmetrical positions within the homologous arms, yielding a 5'-phosphate and a 3'-hydroxyl group; requires a central core of homology in the junction. The consensus cleavage sequence is 5'-(A/T)TT(C/G)-3'. Cleavage occurs on the 3'-side of the TT dinucleotide at the point of strand exchange. HJ branch migration catalyzed by RuvA-RuvB allows RuvC to scan DNA until it finds its consensus sequence, where it cleaves and resolves the cruciform DNA. This is Crossover junction endodeoxyribonuclease RuvC from Mycobacterium sp. (strain MCS).